Here is a 505-residue protein sequence, read N- to C-terminus: Amidophosphoribosyltransferase (505 aa).

The active-site Nucleophile is Cys2. A Glutamine amidotransferase type-2 domain is found at 2–235 (CGIVGIVSQS…AGEAVYVTFD (234 aa)). Mg(2+) is bound by residues Thr306, Asp368, and Asp369. The disordered stretch occupies residues 484 to 505 (RNDNAKKKREKQASNLEIYNEQ). The span at 496-505 (ASNLEIYNEQ) shows a compositional bias: polar residues.

This sequence in the C-terminal section; belongs to the purine/pyrimidine phosphoribosyltransferase family. Mg(2+) is required as a cofactor.

It catalyses the reaction 5-phospho-beta-D-ribosylamine + L-glutamate + diphosphate = 5-phospho-alpha-D-ribose 1-diphosphate + L-glutamine + H2O. It functions in the pathway purine metabolism; IMP biosynthesis via de novo pathway; N(1)-(5-phospho-D-ribosyl)glycinamide from 5-phospho-alpha-D-ribose 1-diphosphate: step 1/2. Catalyzes the formation of phosphoribosylamine from phosphoribosylpyrophosphate (PRPP) and glutamine. This chain is Amidophosphoribosyltransferase, found in Haemophilus influenzae (strain ATCC 51907 / DSM 11121 / KW20 / Rd).